A 464-amino-acid chain; its full sequence is Argininosuccinate lyase (464 aa).

Belongs to the lyase 1 family. Argininosuccinate lyase subfamily.

The protein resides in the cytoplasm. It carries out the reaction 2-(N(omega)-L-arginino)succinate = fumarate + L-arginine. It functions in the pathway amino-acid biosynthesis; L-arginine biosynthesis; L-arginine from L-ornithine and carbamoyl phosphate: step 3/3. This chain is Argininosuccinate lyase, found in Chlorobium phaeobacteroides (strain DSM 266 / SMG 266 / 2430).